A 226-amino-acid polypeptide reads, in one-letter code: Thiopurine S-methyltransferase (226 aa).

S-adenosyl-L-methionine contacts are provided by Trp10, Leu47, Glu68, and Arg130.

It belongs to the class I-like SAM-binding methyltransferase superfamily. TPMT family.

Its subcellular location is the cytoplasm. It carries out the reaction S-adenosyl-L-methionine + a thiopurine = S-adenosyl-L-homocysteine + a thiopurine S-methylether.. The sequence is that of Thiopurine S-methyltransferase from Shewanella sediminis (strain HAW-EB3).